A 778-amino-acid chain; its full sequence is MSNTTVTQKRRTLKVAKSSKTLNVSSGVFRPNQSTTKSINPLFSGKSFGSTGDSKVVDKISAQTPKHTAMVVDENGQDVTPHPLYNPDPGVLQSKQGKVFTALDTSLTTMTEFPSIAFQTTNASLTGPFTRSFFGSASASRISQTAESVTDETKDLLVKQDLSNSISDIQSHREEPKEQLRENILDSTANCYLSETETIWLLDIPAVSVSVESEDAEAVKERNNAYTELCKNRQGNDKYVERSMQTFSDASKTKEVQCDSITMVDKAVMCTVWDMYDSFNNISDVSANTVVSSERHEATIPESSSEGHLVHPKRSNQSLSVVSTVSTVSGSSTHIEKMACVLPLDEEPDLQLILQSDKLKQDLALMERVVLANVFQPKLAAYRQLPIIEDPDCVQMVMEEESWTEQSKNSHCPFLERLWDFSCELTMGRNVSCMVWNKKNPDLLAVGYGQVEFKNPNSGLVCCWSLKNPTWPDRVFHCESGVTALDFSASNANQLAVGMYDGTIAIYNVQTSEQTPITDSSDCANLHTSPVWQLTWIDHEDGLAADKGEILVSVSSDGRISKWIHYKSMECVDLMKLKIHDLQWKRHISSLTPGMCFDFHPNDSKIYLVGTEEGHIHKCSSSYNEQYLESYKAHKRPVYKVTWSPFCSDVFLSCSSDWTIQLWRQDLQIPVMGFTSGQRVVFDIMWSPHCATVFGAVSEGKVEIWDLRVSSLDPTLVNWTSPGVNPTALLFSPETDCVLVGDSEGQVTVYKLKNITAGGGSQGETLEDVIQSTLSSQH.

6 WD repeats span residues 477–517, 526–573, 586–629, 633–673, 676–715, and 721–760; these read HCES…QTPI, LHTS…ECVD, RHIS…QYLE, AHKR…PVMG, SGQR…LDPT, and SPGV…AGGG.

In terms of assembly, part of the multisubunit axonemal dynein complex formed at least of two heavy chains and a number of intermediate and light chains.

It is found in the cytoplasm. The protein localises to the cytoskeleton. It localises to the flagellum axoneme. The protein resides in the cilium axoneme. Its subcellular location is the dynein axonemal particle. In terms of biological role, plays a critical role in the assembly of axonemal dynein complex. Plays a key role in ciliary motility. This is Dynein axonemal intermediate chain 4 from Danio rerio (Zebrafish).